A 222-amino-acid polypeptide reads, in one-letter code: Cytidylate kinase (222 aa).

10-18 contributes to the ATP binding site; that stretch reads GPSASGKGT.

Belongs to the cytidylate kinase family. Type 1 subfamily.

Its subcellular location is the cytoplasm. It catalyses the reaction CMP + ATP = CDP + ADP. The catalysed reaction is dCMP + ATP = dCDP + ADP. The sequence is that of Cytidylate kinase from Chromobacterium violaceum (strain ATCC 12472 / DSM 30191 / JCM 1249 / CCUG 213 / NBRC 12614 / NCIMB 9131 / NCTC 9757 / MK).